The primary structure comprises 328 residues: MNRKKIIVAAVIVALLATLAYGWHYYRQQNDASLTLYGNVDIRTVNLGFRVAGRLASLAVDEGDDIHPGQTLGKLDDGPYLNALKQAQANVQSAQAQLALLKAGYREEEIAQVRSEVAQRQAAFDYADNFLKRQQGLWASKAVSANELENARTARNQARANLQAAKDKLAQFLSGNRPQEIAQAEANLAQTEAELAQAQLNLQDTILLAPSAGTVLTRAVEPGTILSASNTVFTVSLTDPVWVRAYVSERHLGQAIPGSEVEVFTDGRPDKPYHGKIGFVSPTAEFTPKTVETPDLRTDLVYRLRIIITDADESLRQGMPVTVRFPQR.

Residues 1 to 22 (MNRKKIIVAAVIVALLATLAYG) form the signal peptide. Coiled coils occupy residues 80 to 109 (YLNA…REEE) and 142 to 209 (AVSA…ILLA).

This sequence belongs to the UPF0194 family.

It is found in the periplasm. The polypeptide is UPF0194 membrane protein YPTS_1292 (Yersinia pseudotuberculosis serotype IB (strain PB1/+)).